Reading from the N-terminus, the 359-residue chain is MNTEIKARFRVDRSDFTLDVDLSLPGRGITALFGHSGSGKTTCLRAMAGLERASAGYFALGDEVWQDESRGHFIPVHRRALGVVFQEASLFPHLSVRGNMEFGLKRKTTGTTRFSLPEIAELLGIAHLLNRPPDQLSGGERQRVAIARALLAAPKILLMDEPLAALDLKRKLEILPYLERLHSELAIPIIYVSHAPDEVARLADHLVLLDAGRVVASGALNQVLSRIDLPAAFADDAGVVIEATVAEHEVDDLTRLEFPGGAIYVSRRHEPVGTPLRCRIHARDVSLTLLPQMQSSILNCVSASVVDLAPTDTPGHVLVKLDVTGEPLLARITRRSAEKLEIRPGLALRAQIKAVALLA.

The 236-residue stretch at 1–236 folds into the ABC transporter domain; the sequence is MNTEIKARFR…IDLPAAFADD (236 aa). 34 to 41 is an ATP binding site; it reads GHSGSGKT. A Mop domain is found at 294-359; the sequence is QSSILNCVSA…AQIKAVALLA (66 aa).

The protein belongs to the ABC transporter superfamily. Molybdate importer (TC 3.A.1.8) family. In terms of assembly, the complex is composed of two ATP-binding proteins (ModC), two transmembrane proteins (ModB) and a solute-binding protein (ModA).

The protein localises to the cell inner membrane. It catalyses the reaction molybdate(out) + ATP + H2O = molybdate(in) + ADP + phosphate + H(+). Its function is as follows. Part of the ABC transporter complex ModABC involved in molybdenum import. Responsible for energy coupling to the transport system. This chain is Molybdenum import ATP-binding protein ModC, found in Dechloromonas aromatica (strain RCB).